Here is a 78-residue protein sequence, read N- to C-terminus: uncharacterized protein (78 aa).

The disordered stretch occupies residues leucine 20–leucine 78. Over residues glutamate 31–glycine 64 the composition is skewed to acidic residues.

This is an uncharacterized protein from Dictyostelium discoideum (Social amoeba).